The chain runs to 276 residues: Flagellin FljJ (276 aa).

A disordered region spans residues 51–80; the sequence is RPGAGDMSGLAREDEPGSGDIDRGRGPRAG. Residues 61-75 show a composition bias toward basic and acidic residues; the sequence is AREDEPGSGDIDRGR.

Belongs to the bacterial flagellin family. As to quaternary structure, in C.crescentus, the flagellar filament is composed of multiple flagellins of 29 kDa; 27 kDa and 25 kDa.

The protein resides in the secreted. Its subcellular location is the bacterial flagellum. Flagellin is the subunit protein which polymerizes to form the filaments of bacterial flagella. This chain is Flagellin FljJ (fljJ), found in Caulobacter vibrioides (strain ATCC 19089 / CIP 103742 / CB 15) (Caulobacter crescentus).